Here is a 241-residue protein sequence, read N- to C-terminus: Nopaline transport system permease protein NocM (241 aa).

The 199-residue stretch at 17–215 (VPTTLTLAFI…FITFVVSRLV (199 aa)) folds into the ABC transmembrane type-1 domain. The next 5 membrane-spanning stretches (helical) occupy residues 21–41 (LTLAFISLLIGFVVSVPVALM), 52–72 (LAYGYVYIIRSTPLLVQMFLI), 95–115 (PWFCAILALALNTAAYTSEII), 161–181 (VMLIIKSTSLASTITIVEVTG), and 191–211 (YSPVEVFIVAGAIYLFITFVV).

The protein belongs to the binding-protein-dependent transport system permease family. HisMQ subfamily.

Its subcellular location is the cell inner membrane. Its function is as follows. Component of the nopaline active transport system probably consisting of four subunits: Q, M, P and T. This system is also capable of transporting octopine provided that catabolic functions are induced with nopaline. The protein is Nopaline transport system permease protein NocM (nocM) of Agrobacterium fabrum (strain C58 / ATCC 33970) (Agrobacterium tumefaciens (strain C58)).